A 161-amino-acid chain; its full sequence is Allophycocyanin beta chain (161 aa).

At Asn71 the chain carries N4-methylasparagine. A (2R,3E)-phycocyanobilin-binding site is contributed by Cys81.

Belongs to the phycobiliprotein family. Heterodimer of an alpha and a beta chain. Post-translationally, contains one covalently linked phycocyanobilin chromophore.

Its subcellular location is the cellular thylakoid membrane. In terms of biological role, light-harvesting photosynthetic bile pigment-protein from the phycobiliprotein complex. Allophycocyanin has a maximum absorption at approximately 650 nanometers. The chain is Allophycocyanin beta chain (apcB) from Synechocystis sp. (strain PCC 6714) (Aphanocapsa sp. (strain PCC 6714)).